A 445-amino-acid chain; its full sequence is C4-dicarboxylate transport protein 2 (445 aa).

The next 8 helical transmembrane spans lie at 24–44 (ILYVQVLIAILIGIVVGWLFP), 62–82 (LIKMVIAPIIFCTVVSGIAHI), 96–116 (LVYFEIVSTFALLLGLIVGNL), 163–183 (GDILQVLLFAILFGFALMALG), 201–221 (FGVIAIVMKAAPVGAFGAMAF), 237–257 (LIALFYITAGLFVVIVLGLIA), 334–354 (ALGVDLSFSQQVTILIVAMLT), and 366–386 (FITLAATLSVVNPALVPGMAI).

Belongs to the dicarboxylate/amino acid:cation symporter (DAACS) (TC 2.A.23) family.

The protein resides in the cell inner membrane. In terms of biological role, responsible for the transport of dicarboxylates such as succinate, fumarate, and malate from the periplasm across the membrane. This is C4-dicarboxylate transport protein 2 from Bradyrhizobium sp. (strain ORS 278).